The primary structure comprises 229 residues: Protein FMP52-2, mitochondrial (229 aa).

Residues 1–45 constitute a mitochondrion transit peptide; sequence MAAGAFILGSTGLCGYQMLRFAEKSSLFDKISTVGRKLPDFKSEK.

The protein belongs to the FMP52 family.

Its subcellular location is the mitochondrion outer membrane. In Scheffersomyces stipitis (strain ATCC 58785 / CBS 6054 / NBRC 10063 / NRRL Y-11545) (Yeast), this protein is Protein FMP52-2, mitochondrial (FMP522).